A 512-amino-acid chain; its full sequence is MNSHPLMRLLRSRHTVMKLPSNAIKNDTMLPKIIPAIMAGGRGTRLWPLSRATAAKQFLKLIGEETLFQDTLKRVSDAKVYGAPLVITNEEFRFLVAEQARELGVTLSSIVLEPVPRNTAAAVAVAARIVADRFGEDALLLVLPSDHAITVDDTYKKCVRSACIAAAEGKLVTFGIQPTWPATGYGYIERGTYLGKDVHAVQCFVEKPSLEKAAALLETGNYYWNSGMFLFQAASIIAELEEHAPDVLSAVHAAVRGSTVDADFIRLAPESFSQAPSISIDYALMEKTANAAVVCSDFAWSDLGSWDAVWKNEEQNADGNVLKGNVTACNTKNSLVLSHTAHLAVQGMDGVAVIASEDAVFVGRLEEAHEIGNLVKRLAADENTARLTELHPTLIRPWGGYTTMLNGDRFQVRRLFVRPGKMLSLHKHFHRSEHWICVKGTAEVTIEDRVTILHENQSIYIPEGAIHRLGNPGKIMLELVEIQTGAYLGEDDIIRVADESRNEMPDSRRTGP.

It belongs to the mannose-6-phosphate isomerase type 2 family.

The enzyme catalyses alpha-D-mannose 1-phosphate + GTP + H(+) = GDP-alpha-D-mannose + diphosphate. This is Mannose-1-phosphate guanylyltransferase (noeJ) from Sinorhizobium fredii (strain NBRC 101917 / NGR234).